The sequence spans 273 residues: DNA repair protein RecO (273 aa).

The disordered stretch occupies residues 250-273; it reads NVGQNPSGKDDLNERRDVDGTGES. Residues 257–273 show a composition bias toward basic and acidic residues; that stretch reads GKDDLNERRDVDGTGES.

This sequence belongs to the RecO family.

Its function is as follows. Involved in DNA repair and RecF pathway recombination. This is DNA repair protein RecO from Desulfitobacterium hafniense (strain Y51).